We begin with the raw amino-acid sequence, 440 residues long: Xaa-Pro dipeptidase (440 aa).

The Mn(2+) site is built by D244, D255, H335, E380, and E419.

The protein belongs to the peptidase M24B family. Bacterial-type prolidase subfamily. The cofactor is Mn(2+).

The enzyme catalyses Xaa-L-Pro dipeptide + H2O = an L-alpha-amino acid + L-proline. Its function is as follows. Splits dipeptides with a prolyl residue in the C-terminal position. In Shewanella loihica (strain ATCC BAA-1088 / PV-4), this protein is Xaa-Pro dipeptidase.